The sequence spans 358 residues: Replication factor C subunit 5 (358 aa).

This sequence belongs to the activator 1 small subunits family. As to quaternary structure, heteropentamer of subunits rfc1, rfc2, rfc3, rfc4 and rfc5 that forms a complex (RFC) with PCNA in the presence of ATP. Two other complexes exist where rfc1 can be replaced by either ctf18 or elg1 to form the ctf18-RFC or the elg1-RFC complexes respectively.

It is found in the nucleus. Its function is as follows. The elongation of primed DNA templates by DNA polymerase delta and epsilon requires the action of the accessory proteins PCNA and activator 1. This chain is Replication factor C subunit 5 (rfc5), found in Schizosaccharomyces pombe (strain 972 / ATCC 24843) (Fission yeast).